The following is a 569-amino-acid chain: Thiol:disulfide interchange protein DsbD (569 aa).

A signal peptide spans 1-19 (MAQRILTLILLLCSTSAFA). Disulfide bonds link C122–C128 and C187–C309. Transmembrane regions (helical) follow at residues 168–188 (LPFSALWALLIGIGIAFTPCV), 213–233 (LLTFIYVQGMALTYTALGLVV), 248–268 (YVLIGLALVFTLLALSMFGLF), 301–321 (IAGLICSPCTTAPLSAILLYI), 328–348 (WLGGGTLYLYALGMGLPLILI), 362–382 (WMEHVKTAFGFVILALPVFLL), and 391–411 (GLRLWSLLGVAFFGWAFITSL). Residues 430 to 569 (LVSVRPLQDW…FSAHLRDRQP (140 aa)) enclose the Thioredoxin domain. C484 and C487 form a disulfide bridge.

The protein belongs to the thioredoxin family. DsbD subfamily.

The protein resides in the cell inner membrane. It carries out the reaction [protein]-dithiol + NAD(+) = [protein]-disulfide + NADH + H(+). The enzyme catalyses [protein]-dithiol + NADP(+) = [protein]-disulfide + NADPH + H(+). Functionally, required to facilitate the formation of correct disulfide bonds in some periplasmic proteins and for the assembly of the periplasmic c-type cytochromes. Acts by transferring electrons from cytoplasmic thioredoxin to the periplasm. This transfer involves a cascade of disulfide bond formation and reduction steps. In Citrobacter koseri (strain ATCC BAA-895 / CDC 4225-83 / SGSC4696), this protein is Thiol:disulfide interchange protein DsbD.